The primary structure comprises 156 residues: Small ribosomal subunit protein uS7 (156 aa).

This sequence belongs to the universal ribosomal protein uS7 family. Part of the 30S ribosomal subunit. Contacts proteins S9 and S11.

In terms of biological role, one of the primary rRNA binding proteins, it binds directly to 16S rRNA where it nucleates assembly of the head domain of the 30S subunit. Is located at the subunit interface close to the decoding center, probably blocks exit of the E-site tRNA. This is Small ribosomal subunit protein uS7 from Cronobacter sakazakii (strain ATCC BAA-894) (Enterobacter sakazakii).